A 66-amino-acid polypeptide reads, in one-letter code: Large ribosomal subunit protein bL35 (66 aa).

The protein belongs to the bacterial ribosomal protein bL35 family.

The sequence is that of Large ribosomal subunit protein bL35 from Phenylobacterium zucineum (strain HLK1).